A 796-amino-acid polypeptide reads, in one-letter code: MMRLDFQRKLLSHTERVKAVDFHPTEPWVIASHYNGQVGIWNYNTQTLVRSFDINDVPIRACAFIARKNWFVCGSDDFQVRVYNYNTGEKVTQFEAHPDYIRALVVHPTQPFLLTSSDDMTIKCFNWDMSWKCVQTFEGHSRYVMSLAINPKDTNTFASSCLDGTVKVWSFGSSVANFTLQAHDRGVNYVNYYPAGDKPYLITAGDDNLIKVWDYQTKACVRILEGHTNNVSFAFFHSKFPIIISGSEDGTVKIWHTLSYSLIKSYNFSLDRAWCIAQNKDNGLVTVGFDNGLITFSLGRDEPSVTMDSSGKVVWSNYNEVMSAMIRPAKEQSDLTDGSLISLSVKELGTTELYPAVLKHSPNGRFVSVCGNGEYIVYTALAWRNKAYGKALDFAWSADSNVYGSRTSDRSIVIHKNFKESNRLDLSYSCDKIFGGFLLGVVGSDFICFYDWDTGILVRKIDVKPKGVYWNDDGRFVILACDDDFYLLGFNAEMFYSAVESGTADEEEGVADSFEALADVSESVVNGKWVAETFIYTTTAARLNYLIGDQTYKIANVESSFYLLGYIPRDDRIYLTDRDMNVVSYSFNLAIIEYQSLVLKGDLEAAQGLLEQISETDRPRLSDFLSRLGYKEAALELSGDSVQRFELALDAQRLDIASQIAQELDDPLKWRSLGDAALNAWDFVLAQECFEKGKDYGSLVLLYTATNNHEGLKELSQLTKSTKINNTAFICSWLTNQPAECVNILTSTQRYPEANLFAATYCPDEVKNVLPEWKVDLTKNQKERIADSLGDLELKN.

6 WD repeats span residues 4–42 (LDFQRKLLSHTERVKAVDFHPTEPWVIASHYNGQVGIWN), 46–84 (QTLVRSFDINDVPIRACAFIARKNWFVCGSDDFQVRVYN), 88–126 (GEKVTQFEAHPDYIRALVVHPTQPFLLTSSDDMTIKCFN), 131–170 (WKCVQTFEGHSRYVMSLAINPKDTNTFASSCLDGTVKVWS), 172–214 (GSSV…KVWD), and 218–256 (KACVRILEGHTNNVSFAFFHSKFPIIISGSEDGTVKIWH).

This sequence belongs to the WD repeat COPB2 family. In terms of assembly, oligomeric complex that consists of at least the alpha, beta, beta', gamma, delta, epsilon and zeta subunits.

It localises to the cytoplasm. The protein resides in the golgi apparatus membrane. It is found in the cytoplasmic vesicle. Its subcellular location is the COPI-coated vesicle membrane. In terms of biological role, the coatomer is a cytosolic protein complex that binds to dilysine motifs and reversibly associates with Golgi non-clathrin-coated vesicles, which further mediate biosynthetic protein transport from the ER, via the Golgi up to the trans Golgi network. Coatomer complex is required for budding from Golgi membranes, and is essential for the retrograde Golgi-to-ER transport of dilysine-tagged proteins. In Schizosaccharomyces pombe (strain 972 / ATCC 24843) (Fission yeast), this protein is Probable coatomer subunit beta' (sec27).